We begin with the raw amino-acid sequence, 438 residues long: MALFGSSGIRGVIGSGMTPELALKAGKALGLLHKKIVIGHDPRTSSHMIEDAMVAGMLCSGARVTRIGLVSTPTLAYAARNYDCGIMITASHNPPEYNGIKFWNPDGMAFSLKQQDELERLIESDIRGVGWEYIGSESHASNAILDHIDVILRNVEKCSLKVVVDCGCGAATTITPYVLREMGCKVISLNAQPDGFFPARDPEPIDENLSELKEAVKAFDADLGIAHDGDADRMMAVDDQGRLVTGDELLAYFCRFEVKDSVVCPVDASMVVDRCKPGVKVYRTRIGDAFVSEEVRKVNADFGGETSGTWIFPRISYCPDGIYAAAKLVELVSKNGRLSKAIADLPRYPLKRGGMKFSHGNKADIMGGIRAEIEQANSRINTLDGVRVEYPEGWVLIRPSGTEPKIRITAEAVDEGAAEKLYSQAESIVKRCIDSCAQ.

The active-site Phosphoserine intermediate is the Ser91. Residues Ser91, Asp228, Asp230, and Asp232 each contribute to the Mg(2+) site. Ser91 is modified (phosphoserine).

It belongs to the phosphohexose mutase family. Mg(2+) is required as a cofactor. In terms of processing, activated by phosphorylation.

The catalysed reaction is alpha-D-glucosamine 1-phosphate = D-glucosamine 6-phosphate. In terms of biological role, catalyzes the conversion of glucosamine-6-phosphate to glucosamine-1-phosphate. The chain is Probable phosphoglucosamine mutase from Methanocella arvoryzae (strain DSM 22066 / NBRC 105507 / MRE50).